Reading from the N-terminus, the 246-residue chain is Putative L,D-transpeptidase YafK (246 aa).

Residues 1 to 19 form the signal peptide; it reads MRKIALILAMLLIPCVSFA. A L,D-TPase catalytic domain is found at 44–174; it reads VYIQIFKEER…GQPSVQVSIY (131 aa). The Proton donor/acceptor role is filled by His135. Residue Cys143 is the Nucleophile of the active site.

It belongs to the YkuD family.

The protein operates within cell wall biogenesis; peptidoglycan biosynthesis. The sequence is that of Putative L,D-transpeptidase YafK (yafK) from Escherichia coli O157:H7.